The following is a 492-amino-acid chain: N-succinylglutamate 5-semialdehyde dehydrogenase (492 aa).

220–225 is a binding site for NAD(+); that stretch reads GSANTG. Active-site residues include E243 and C277.

Belongs to the aldehyde dehydrogenase family. AstD subfamily.

The catalysed reaction is N-succinyl-L-glutamate 5-semialdehyde + NAD(+) + H2O = N-succinyl-L-glutamate + NADH + 2 H(+). It functions in the pathway amino-acid degradation; L-arginine degradation via AST pathway; L-glutamate and succinate from L-arginine: step 4/5. Functionally, catalyzes the NAD-dependent reduction of succinylglutamate semialdehyde into succinylglutamate. The chain is N-succinylglutamate 5-semialdehyde dehydrogenase from Shigella flexneri.